A 160-amino-acid polypeptide reads, in one-letter code: MSSLTHLTSHGEAVMVDVSDKAETERVAIAEARVVMRMETLELALSGNAEKGDVVATARIAGIMAAKKTHELIPLCHPLLLTKVGVDLEPDPSLPGFRVQALAKVKGQTGVEMEALTAVSVACLTLYDMLKAVDRFMRIEGIGLLEKQGGKSGSWKREKE.

Residues 75–77 (LCH) and 113–114 (ME) contribute to the substrate site. The active site involves D128.

The protein belongs to the MoaC family. As to quaternary structure, homohexamer; trimer of dimers.

The catalysed reaction is (8S)-3',8-cyclo-7,8-dihydroguanosine 5'-triphosphate = cyclic pyranopterin phosphate + diphosphate. It functions in the pathway cofactor biosynthesis; molybdopterin biosynthesis. Functionally, catalyzes the conversion of (8S)-3',8-cyclo-7,8-dihydroguanosine 5'-triphosphate to cyclic pyranopterin monophosphate (cPMP). This Beijerinckia indica subsp. indica (strain ATCC 9039 / DSM 1715 / NCIMB 8712) protein is Cyclic pyranopterin monophosphate synthase.